We begin with the raw amino-acid sequence, 305 residues long: UDP-3-O-acyl-N-acetylglucosamine deacetylase (305 aa).

Residues His79, His238, and Asp242 each coordinate Zn(2+). The active-site Proton donor is His265.

It belongs to the LpxC family. Requires Zn(2+) as cofactor.

It catalyses the reaction a UDP-3-O-[(3R)-3-hydroxyacyl]-N-acetyl-alpha-D-glucosamine + H2O = a UDP-3-O-[(3R)-3-hydroxyacyl]-alpha-D-glucosamine + acetate. The protein operates within glycolipid biosynthesis; lipid IV(A) biosynthesis; lipid IV(A) from (3R)-3-hydroxytetradecanoyl-[acyl-carrier-protein] and UDP-N-acetyl-alpha-D-glucosamine: step 2/6. Catalyzes the hydrolysis of UDP-3-O-myristoyl-N-acetylglucosamine to form UDP-3-O-myristoylglucosamine and acetate, the committed step in lipid A biosynthesis. The polypeptide is UDP-3-O-acyl-N-acetylglucosamine deacetylase (Shewanella woodyi (strain ATCC 51908 / MS32)).